The following is a 444-amino-acid chain: Proline--tRNA ligase (444 aa).

Belongs to the class-II aminoacyl-tRNA synthetase family. ProS type 2 subfamily. As to quaternary structure, homodimer.

The protein resides in the cytoplasm. The enzyme catalyses tRNA(Pro) + L-proline + ATP = L-prolyl-tRNA(Pro) + AMP + diphosphate. Catalyzes the attachment of proline to tRNA(Pro) in a two-step reaction: proline is first activated by ATP to form Pro-AMP and then transferred to the acceptor end of tRNA(Pro). The sequence is that of Proline--tRNA ligase from Maricaulis maris (strain MCS10) (Caulobacter maris).